The primary structure comprises 105 residues: Cytochrome c-553-like (105 aa).

Residues 1-29 form the signal peptide; that stretch reads MAGIVSLVILAVALFSFMNFDPYVSQVLA. Residues cysteine 45, cysteine 48, histidine 49, and methionine 85 each contribute to the heme c site.

Post-translationally, binds 1 heme c group covalently per subunit.

In Synechocystis sp. (strain ATCC 27184 / PCC 6803 / Kazusa), this protein is Cytochrome c-553-like (cytM).